The primary structure comprises 301 residues: tRNA-cytidine(32) 2-sulfurtransferase (301 aa).

A PP-loop motif motif is present at residues S55–S60. [4Fe-4S] cluster-binding residues include C130, C133, and C221.

It belongs to the TtcA family. Homodimer. The cofactor is Mg(2+). Requires [4Fe-4S] cluster as cofactor.

It is found in the cytoplasm. It carries out the reaction cytidine(32) in tRNA + S-sulfanyl-L-cysteinyl-[cysteine desulfurase] + AH2 + ATP = 2-thiocytidine(32) in tRNA + L-cysteinyl-[cysteine desulfurase] + A + AMP + diphosphate + H(+). It functions in the pathway tRNA modification. Functionally, catalyzes the ATP-dependent 2-thiolation of cytidine in position 32 of tRNA, to form 2-thiocytidine (s(2)C32). The sulfur atoms are provided by the cysteine/cysteine desulfurase (IscS) system. The sequence is that of tRNA-cytidine(32) 2-sulfurtransferase from Acinetobacter baumannii (strain SDF).